A 159-amino-acid chain; its full sequence is uncharacterized protein (159 aa).

The protein to M.jannaschii MJECL20.

This is an uncharacterized protein from Methanocaldococcus jannaschii (strain ATCC 43067 / DSM 2661 / JAL-1 / JCM 10045 / NBRC 100440) (Methanococcus jannaschii).